Reading from the N-terminus, the 724-residue chain is Semaphorin-2A (724 aa).

An N-terminal signal peptide occupies residues 1 to 25 (MSLLQLSPLLALLLLLCSSVSETAA). Positions 45-522 (QGNNNYGKHG…TDHRIKQIDL (478 aa)) constitute a Sema domain. Asn95 is a glycosylation site (N-linked (GlcNAc...) asparagine). Cys118 and Cys129 are joined by a disulfide. Residues Asn163, Asn190, Asn229, and Asn314 are each glycosylated (N-linked (GlcNAc...) asparagine). Intrachain disulfides connect Cys291/Cys399 and Cys315/Cys358. The N-linked (GlcNAc...) asparagine glycan is linked to Asn401. Disulfide bonds link Cys525-Cys541 and Cys535-Cys550. Residues 552–663 (PYELDLLQDV…LCSYNITVDA (112 aa)) form the Ig-like C2-type domain. Asn563 carries N-linked (GlcNAc...) asparagine glycosylation. A disulfide bridge links Cys590 with Cys647. 3 N-linked (GlcNAc...) asparagine glycosylation sites follow: Asn658, Asn670, and Asn708.

This sequence belongs to the semaphorin family. Interacts with PlexB. As to expression, transiently expressed by a single large muscle during motoneuron outgrowth and synapse formation.

It is found in the secreted. Ligand for transmembrane receptor PlexB. Plays a role in growth cone guidance. Required for both proper adult behavior and survival. Can function as a selective target-derived signal that inhibits the formation of specific synaptic terminal arbors. Function in neurons is essential for adult survival, motor neuron survival, and is important for climbing behavior and activity. During embryogenesis, plays an important role in correct salivary gland positioning. The polypeptide is Semaphorin-2A (Drosophila melanogaster (Fruit fly)).